The chain runs to 470 residues: Cytochrome P450 monooxygenase FUM2 (470 aa).

Cys-414 contacts heme.

It belongs to the cytochrome P450 family. Requires heme as cofactor.

Its pathway is mycotoxin biosynthesis. Its function is as follows. Cytochrome P450 monooxygenase; part of the gene cluster that mediates the biosynthesis of fumonisins B1 (FB1), B2 (FB2), B3 (FB3), and B4 (FB4), which are carcinogenic mycotoxins. Within the pathway, FUM2 performs the C-10 hydroxylation present in FB2 and FB4 and which occurs early in the biosynthesis. The biosynthesis starts with the FUM1-catalyzed carbon chain assembly from one molecule of acetyl-CoA, eight molecules of malonyl-CoA, and two molecules of methionine (in S-adenosyl form). The C18 polyketide chain is released from the enzyme by a nucleophilic attack of a carbanion, which is derived from R-carbon of alanine by decarboxylation, on the carbonyl carbon of polyketide acyl chain. This step is catalyzed by the pyridoxal 5'-phosphate-dependent aminoacyl transferase FUM8. The resultant 3-keto intermediate is then stereospecifically reduced to a 3-hydroxyl product by reductase FUM13. Subsequent oxidations at C-10 by the cytochrome P450 monooxygenase FUM2, C-14 and C-15 by FUM6, FUM12 or FUM15, tricarballylic esterification of the hydroxyl groups on C-14 and C-15 by acyltransferase FUM14, and C-5 hydroxylation by 2-keto-glutarate-dependent dioxygenase FUM3 furnish the biosynthesis of fumonisins. The tricarballylic moieties are most likely derived from the citric acid cycle, and their addition to the carbon backbone may involve FUM7, FUM10, FUM11 and FUM14. This is Cytochrome P450 monooxygenase FUM2 from Gibberella moniliformis (strain M3125 / FGSC 7600) (Maize ear and stalk rot fungus).